The primary structure comprises 358 residues: Phospho-N-acetylmuramoyl-pentapeptide-transferase (358 aa).

The next 10 membrane-spanning stretches (helical) occupy residues 25–45, 73–93, 97–117, 134–154, 172–192, 197–217, 233–253, 261–281, 286–306, and 335–355; these read RTIYAVITALVVSFILGPWVI, TMGGILILASIVIPTLLWADL, YVWTTLFVILGYGLIGFTDDY, MFWQMLIAGGAVCFLVLVAGM, YLYIPFGMLVVVGASNAVNLT, GLAIGPVAINAATFLLFAYIA, GAGELAVLCGAMVGAGIGFLW, VFMGDVGSLSLGGGLGILAVI, MLLVIVGGIFVVEALSVIFQV, and KIIVRFWIITIILALVAISTL.

It belongs to the glycosyltransferase 4 family. MraY subfamily. Requires Mg(2+) as cofactor.

It is found in the cell inner membrane. It catalyses the reaction UDP-N-acetyl-alpha-D-muramoyl-L-alanyl-gamma-D-glutamyl-meso-2,6-diaminopimeloyl-D-alanyl-D-alanine + di-trans,octa-cis-undecaprenyl phosphate = di-trans,octa-cis-undecaprenyl diphospho-N-acetyl-alpha-D-muramoyl-L-alanyl-D-glutamyl-meso-2,6-diaminopimeloyl-D-alanyl-D-alanine + UMP. Its pathway is cell wall biogenesis; peptidoglycan biosynthesis. In terms of biological role, catalyzes the initial step of the lipid cycle reactions in the biosynthesis of the cell wall peptidoglycan: transfers peptidoglycan precursor phospho-MurNAc-pentapeptide from UDP-MurNAc-pentapeptide onto the lipid carrier undecaprenyl phosphate, yielding undecaprenyl-pyrophosphoryl-MurNAc-pentapeptide, known as lipid I. This is Phospho-N-acetylmuramoyl-pentapeptide-transferase from Geobacter sulfurreducens (strain ATCC 51573 / DSM 12127 / PCA).